We begin with the raw amino-acid sequence, 59 residues long: Large ribosomal subunit protein bL32 (59 aa).

A compositionally biased stretch (basic residues) spans 1–15 (MAVPKKKTSKSKRDM). The interval 1–26 (MAVPKKKTSKSKRDMRRATWNRKAAA) is disordered.

This sequence belongs to the bacterial ribosomal protein bL32 family.

This Cyanothece sp. (strain PCC 7425 / ATCC 29141) protein is Large ribosomal subunit protein bL32.